Reading from the N-terminus, the 705-residue chain is tRNA 5-methylaminomethyl-2-thiouridine biosynthesis bifunctional protein MnmC (705 aa).

A tRNA (mnm(5)s(2)U34)-methyltransferase region spans residues 1 to 241 (MTIKTADIQF…KREMLAGIIA (241 aa)). The segment at 289–705 (IGAGIAGASM…LIRQLIRREV (417 aa)) is FAD-dependent cmnm(5)s(2)U34 oxidoreductase.

The protein in the N-terminal section; belongs to the methyltransferase superfamily. tRNA (mnm(5)s(2)U34)-methyltransferase family. It in the C-terminal section; belongs to the DAO family. It depends on FAD as a cofactor.

It is found in the cytoplasm. The enzyme catalyses 5-aminomethyl-2-thiouridine(34) in tRNA + S-adenosyl-L-methionine = 5-methylaminomethyl-2-thiouridine(34) in tRNA + S-adenosyl-L-homocysteine + H(+). Functionally, catalyzes the last two steps in the biosynthesis of 5-methylaminomethyl-2-thiouridine (mnm(5)s(2)U) at the wobble position (U34) in tRNA. Catalyzes the FAD-dependent demodification of cmnm(5)s(2)U34 to nm(5)s(2)U34, followed by the transfer of a methyl group from S-adenosyl-L-methionine to nm(5)s(2)U34, to form mnm(5)s(2)U34. This chain is tRNA 5-methylaminomethyl-2-thiouridine biosynthesis bifunctional protein MnmC, found in Pseudoalteromonas atlantica (strain T6c / ATCC BAA-1087).